Consider the following 315-residue polypeptide: Gamma-hemolysin component C (315 aa).

The signal sequence occupies residues 1 to 29; that stretch reads MLKNKILTTTLSVSLLAPLANPLLENAKA.

This sequence belongs to the aerolysin family. In terms of assembly, toxicity requires sequential binding and synergistic association of a class S and a class F component which form heterooligomeric complexes. HlgC (class S) associates with HlgB (class F) thus forming an CB toxin.

Its function is as follows. Toxin that seems to act by forming pores in the membrane of the cell. Has a hemolytic and a leucotoxic activity. The polypeptide is Gamma-hemolysin component C (hlgC) (Staphylococcus aureus (strain COL)).